The primary structure comprises 506 residues: Cysteine--tRNA ligase (506 aa).

Cys34 provides a ligand contact to Zn(2+). The 'HIGH' region motif lies at 36-46; sequence PTVYDFAHIGN. Zn(2+)-binding residues include Cys230, His269, and Glu273. The 'KMSKS' region motif lies at 302–306; sequence KMSKS. Lys305 provides a ligand contact to ATP.

This sequence belongs to the class-I aminoacyl-tRNA synthetase family. As to quaternary structure, monomer. Zn(2+) serves as cofactor.

The protein localises to the cytoplasm. It catalyses the reaction tRNA(Cys) + L-cysteine + ATP = L-cysteinyl-tRNA(Cys) + AMP + diphosphate. This Brucella suis (strain ATCC 23445 / NCTC 10510) protein is Cysteine--tRNA ligase.